Here is a 642-residue protein sequence, read N- to C-terminus: Uromodulin (642 aa).

Residues 1 to 26 form the signal peptide; that stretch reads MGQLSSLTSVWMVVVVTSWVIIAANI. One can recognise an EGF-like 1 domain in the interval 32 to 64; the sequence is RSCSECHSNATCMEDGMVTTCSCLVGFTGSGFE. Intrachain disulfides connect Cys34-Cys43, Cys37-Cys52, Cys54-Cys65, Cys71-Cys85, Cys79-Cys94, Cys96-Cys108, Cys114-Cys128, Cys122-Cys137, Cys139-Cys150, Cys152-Cys163, Cys157-Cys172, Cys176-Cys269, Cys197-Cys284, Cys219-Cys257, Cys225-Cys289, Cys250-Cys258, Cys299-Cys308, Cys302-Cys317, Cys319-Cys348, Cys336-Cys426, and Cys367-Cys390. An N-linked (GlcNAc...) asparagine glycan is attached at Asn40. Residues 67-109 enclose the EGF-like 2; calcium-binding domain; sequence DLDECAIPGAHNCSEGSSCMNTLGSYLCTCPDGFRLTPGLGCI. The N-linked (GlcNAc...) asparagine glycan is linked to Asn78. The EGF-like 3; calcium-binding domain occupies 110–151; sequence DVDECSEPGLSRCHALATCINNKGNYSCVCPAGYRGDGQHCE. An N-linked (GlcNAc...) asparagine glycan is attached at Asn134. The beta hairpin stretch occupies residues 152-173; sequence CSPGSCGPGLDCVPVGDALVCA. Positions 174–293 are D10C; it reads DPCQEHRILD…CYLAYCTDPT (120 aa). 2 N-linked (GlcNAc...) asparagine glycosylation sites follow: Asn234 and Asn246. Asn277 carries N-linked (GlcNAc...) asparagine glycosylation. The region spanning 294–325 is the EGF-like 4 domain; sequence SVLGTCEECSVEEDCKSHDGMWSCQCKQDFNV. A glycan (N-linked (GlcNAc...) asparagine) is linked at Asn324. The ZP-N stretch occupies residues 335–430; that stretch reads ECRPNDIKVS…KINFECSYPL (96 aa). In terms of domain architecture, ZP spans 335 to 590; it reads ECRPNDIKVS…PTCSGTRFRS (256 aa). N-linked (GlcNAc...) asparagine glycans are attached at residues Asn397 and Asn448. Residues 431–454 are flexible ZP-N/ZP-C linker; important for secretion and polymerization into filaments; sequence DMKVSLETSLQPIVSSLNISVGGT. The tract at residues 455–465 is internal hydrophobic patch (IHP); sequence GMFTVRMALFQ. A ZP-C region spans residues 455–590; sequence GMFTVRMALF…PTCSGTRFRS (136 aa). 3 cysteine pairs are disulfide-bonded: Cys507-Cys567, Cys528-Cys583, and Cys572-Cys579. A glycan (N-linked (GlcNAc...) asparagine) is linked at Asn514. The essential for cleavage by HPN stretch occupies residues 587 to 590; it reads RFRS. Residues 599–607 form an external hydrophobic patch (EHP); regulates polymerization into filaments region; the sequence is VLNLGPITR. Ser620 carries GPI-anchor amidated serine lipidation. Positions 621–642 are cleaved as a propeptide — removed in mature form; that stretch reads SLGFLKVCLPLLLSATLTLMFQ.

In terms of assembly, homodimer that then polymerizes into long filaments. The filaments can additionally assemble laterally to form a sheet. The filaments consist of a zigzag-shaped backbone with laterally protruding arms which interact with bacterial adhesin fimH. Two fimH molecules can bind to a single UMOD monomer. In terms of processing, N-glycosylated. Post-translationally, proteolytically cleaved at a conserved C-terminal proteolytic cleavage site to generate the secreted form found in urine. This cleavage is catalyzed by HPN. As to expression, detected in kidney and pancreas.

The protein localises to the apical cell membrane. It is found in the basolateral cell membrane. The protein resides in the cell projection. Its subcellular location is the cilium membrane. It localises to the secreted. In terms of biological role, functions in biogenesis and organization of the apical membrane of epithelial cells of the thick ascending limb of Henle's loop (TALH), where it promotes formation of complex filamentous gel-like structure that may play a role in the water barrier permeability. May serve as a receptor for binding and endocytosis of cytokines (IL-1, IL-2) and TNF. Facilitates neutrophil migration across renal epithelia. Functionally, in the urine, may contribute to colloid osmotic pressure, retards passage of positively charged electrolytes, and inhibits formation of liquid containing supersaturated salts and subsequent formation of salt crystals. Protects against urinary tract infections by binding to type 1 fimbriated E.coli. Binds to bacterial adhesin fimH which mediates the stable formation of bacterial aggregates, prevents the binding of E.coli to uroplakins UPK1A and UPK1B which act as urothelial receptors for type I fimbriae, and allows for pathogen clearance through micturation. Also promotes aggregation of other bacteria including K.pneumoniae, P.aeruginosa and S.mitis and so may also protect against other uropathogens. The polypeptide is Uromodulin (UMOD) (Canis lupus familiaris (Dog)).